The sequence spans 210 residues: dTTP/UTP pyrophosphatase (210 aa).

Asp89 acts as the Proton acceptor in catalysis.

Belongs to the Maf family. YhdE subfamily. The cofactor is a divalent metal cation.

The protein localises to the cytoplasm. The enzyme catalyses dTTP + H2O = dTMP + diphosphate + H(+). It carries out the reaction UTP + H2O = UMP + diphosphate + H(+). In terms of biological role, nucleoside triphosphate pyrophosphatase that hydrolyzes dTTP and UTP. May have a dual role in cell division arrest and in preventing the incorporation of modified nucleotides into cellular nucleic acids. This Burkholderia orbicola (strain AU 1054) protein is dTTP/UTP pyrophosphatase.